Reading from the N-terminus, the 536-residue chain is Phosphoenolpyruvate carboxykinase (ATP) (536 aa).

Residues arginine 62, tyrosine 203, and lysine 209 each contribute to the substrate site. ATP is bound by residues lysine 209, histidine 228, and 244 to 252; that span reads GLSGTGKTT. 2 residues coordinate Mn(2+): lysine 209 and histidine 228. Mn(2+) is bound at residue aspartate 265. Residues glutamate 293, arginine 329, 445 to 446, and threonine 451 each bind ATP; that span reads RI. Arginine 329 serves as a coordination point for substrate.

Belongs to the phosphoenolpyruvate carboxykinase (ATP) family. In terms of assembly, monomer. Mn(2+) is required as a cofactor.

It is found in the cytoplasm. It carries out the reaction oxaloacetate + ATP = phosphoenolpyruvate + ADP + CO2. It participates in carbohydrate biosynthesis; gluconeogenesis. Involved in the gluconeogenesis. Catalyzes the conversion of oxaloacetate (OAA) to phosphoenolpyruvate (PEP) through direct phosphoryl transfer between the nucleoside triphosphate and OAA. The sequence is that of Phosphoenolpyruvate carboxykinase (ATP) from Glaesserella parasuis serovar 5 (strain SH0165) (Haemophilus parasuis).